Here is a 361-residue protein sequence, read N- to C-terminus: Cysteine-rich with EGF-like domain protein 2-B (361 aa).

An N-terminal signal peptide occupies residues 1 to 24 (MNGSRAWRLAAWLLLCLSCSAAVA). The EGF-like 1 domain maps to 134-176 (DCLACLGGSERPCHGNGFCSGDGTRSGDGSCRCKAEYTGSFCL). 3 disulfides stabilise this stretch: cysteine 138-cysteine 152, cysteine 146-cysteine 164, and cysteine 166-cysteine 175. Asparagine 188 carries N-linked (GlcNAc...) asparagine glycosylation. FU repeat units follow at residues 191–238 (HAVC…EESP) and 251–298 (SFLC…SEKL). The EGF-like 2; calcium-binding domain occupies 288–329 (DVDECDASEKLCLRENEVCLNTAGSYKCTCSEGFEDKEGNCV). 3 disulfide bridges follow: cysteine 292–cysteine 306, cysteine 299–cysteine 315, and cysteine 317–cysteine 328. The disordered stretch occupies residues 339-361 (ITEGETGTPASDTNILNTAHEDL). Over residues 346–355 (TPASDTNILN) the composition is skewed to polar residues.

The protein belongs to the CRELD family.

The protein localises to the secreted. The protein resides in the endoplasmic reticulum. Functionally, possible role in neuronal acetylcholine receptor transport. In Xenopus laevis (African clawed frog), this protein is Cysteine-rich with EGF-like domain protein 2-B (creld2-b).